Consider the following 145-residue polypeptide: D-aminoacyl-tRNA deacylase (145 aa).

Positions 137 to 138 (GP) match the Gly-cisPro motif, important for rejection of L-amino acids motif.

This sequence belongs to the DTD family. In terms of assembly, homodimer.

It is found in the cytoplasm. It carries out the reaction glycyl-tRNA(Ala) + H2O = tRNA(Ala) + glycine + H(+). It catalyses the reaction a D-aminoacyl-tRNA + H2O = a tRNA + a D-alpha-amino acid + H(+). Functionally, an aminoacyl-tRNA editing enzyme that deacylates mischarged D-aminoacyl-tRNAs. Also deacylates mischarged glycyl-tRNA(Ala), protecting cells against glycine mischarging by AlaRS. Acts via tRNA-based rather than protein-based catalysis; rejects L-amino acids rather than detecting D-amino acids in the active site. By recycling D-aminoacyl-tRNA to D-amino acids and free tRNA molecules, this enzyme counteracts the toxicity associated with the formation of D-aminoacyl-tRNA entities in vivo and helps enforce protein L-homochirality. This Salmonella typhimurium (strain LT2 / SGSC1412 / ATCC 700720) protein is D-aminoacyl-tRNA deacylase.